Reading from the N-terminus, the 524-residue chain is MASRDLAESLLPVGGGAATATATATAHDEYDERAYDSDDKVSIAVSDSDSEDGGGGGGDAMRPAFSWRKLWRFTGPGFLMCIAFLDPGNLEGDLQAGAAAGYQLLWLLLWATVMGALVQLLSARLGVATGKHLAELCREEYPPWATRALWAMTELALVGADIQEVIGSAIAIKILSAGTVPLWGGVVITAFDCFIFLFLENYGVRKLEAFFGVLIAVMAVSFAIMFGETKPSGKELLIGLVVPKLSSRTIKQAVGIVGCIIMPHNVFLHSALVQSRKIDTNKKSRVQEAVFYYNIESILALIVSFFINICVTTVFAKGFYGSEQADGIGLENAGQYLQQKYGTAFFPILYIWAIGLLASGQSSTITGTYAGQFVMGGFLNLRLKKWLRAMITRSFAIIPTMIVALFFDTEDPTMDILNEALNVLQSIQIPFALIPLITLVSKEQVMGSFVVGPITKVISWIVTVFLMLINGYLILSFYATEVRGALVRSSLCVVLAVYLAFIVYLIMRNTSLYSRLRSAMTKST.

Residues 34–58 (AYDSDDKVSIAVSDSDSEDGGGGGG) are disordered. Transmembrane regions (helical) follow at residues 70–90 (LWRF…PGNL), 98–118 (AAAG…GALV), 155–175 (LALV…IKIL), 179–199 (TVPL…FLFL), 207–227 (LEAF…IMFG), 253–273 (AVGI…SALV), 295–315 (IESI…TTVF), 341–361 (YGTA…ASGQ), 389–409 (AMIT…FFDT), 420–440 (ALNV…ITLV), 457–477 (VISW…ILSF), and 486–506 (LVRS…VYLI).

It belongs to the NRAMP (TC 2.A.55) family.

It localises to the membrane. Probable metal transporter. The chain is Metal transporter Nramp2 (NRAMP2) from Oryza sativa subsp. japonica (Rice).